Reading from the N-terminus, the 872-residue chain is MSELTPMMRQYLEIKADHPDSILFFRLGDFYEMFLDDAVKASRILDITLTSRGKGGDGADVPLCGVPYHSAAPYIAKLIEAGEKVAICEQVEDPKTTKGIVKRQVVKVVTPGLVVESESLSPKENNFLLSLFDGNNGRWGVAYLDISTGEFRLTEVEGHDAAWGEVACANPREILVPASFRENMRGEGRGDLAAGRTFTYVDDWVYDRDYTERLIKNHFGVASPGALGCDGYAEGLQAAAAVLHYLQETQKGRVDHIRELRAYRTQEFLVLDEATRRNLELTATLSEGKRRGSLLGLLDRTATAMGGRKLRQWINYPLVIVEKIKERQDAVGELANDPALRAGIREALEGVYDLERLNGRISLASSGAKDLVALKASLQRIPPLLSLLESTGTALLGELCKGIDPMDEVAELIGRGIVDDPPFVLREGGIIADGYHAELDELRAISREGKGFIARLEAKEKARTGITSLKIRYNKVFGYYIEVTKTNLGSIPEDYIRRQTLANAERFITPELKEYEEKVLGAEERIVELEYSLFQQIRQSVAAEGERLARTADRLATLDVLASLADVAHERNYCRPGIDDGDTLSISEGRHPVVEALNVSERFVPNDVLLDNGENQLVIITGPNMAGKSTFMRQVALIVLMAQLGSFVPATEARIGVVDRIFTRVGASDNLARGQSTFMVEMMETAAILRNATPKSLVVLDEIGRGTSTFDGVSIAWAVAEYLHDTARCAAKTLFATHYHELTELAVTRGKIKNCNVAVKEWNDQVIFLRKIVEGGASHSYGIQVARLAGLPIEVIERAKEILHNLEKGEYVEGGVPRISRGKRAAAPKSSPQLSLFEQGDDLLRQRLTGLNIAALTPLEALNILDELKRMV.

622 to 629 contacts ATP; the sequence is GPNMAGKS.

Belongs to the DNA mismatch repair MutS family.

Functionally, this protein is involved in the repair of mismatches in DNA. It is possible that it carries out the mismatch recognition step. This protein has a weak ATPase activity. The chain is DNA mismatch repair protein MutS from Geobacter metallireducens (strain ATCC 53774 / DSM 7210 / GS-15).